The sequence spans 473 residues: N-lysine methyltransferase SETD6 (473 aa).

Lys-39 carries the N6-methylated lysine; by autocatalysis modification. An SET domain is found at 60–286; it reads PPAQVAVSRQ…KGHEIFNTYG (227 aa). Residue 73–75 coordinates S-adenosyl-L-methionine; the sequence is AGY. Trp-122 serves as a coordination point for substrate. Lys-179 carries the N6-methylated lysine; by autocatalysis modification. S-adenosyl-L-methionine is bound at residue Tyr-223. The substrate site is built by Ser-224 and Gln-226. Residue 251–252 coordinates S-adenosyl-L-methionine; that stretch reads NH. The substrate site is built by Tyr-262 and Tyr-297. Residue Tyr-297 coordinates S-adenosyl-L-methionine. N6-methylated lysine; by autocatalysis is present on Lys-372.

It belongs to the class V-like SAM-binding methyltransferase superfamily. Histone-lysine methyltransferase family. SETD6 subfamily. In terms of assembly, monomer, homodimer and homotrimer; these structures are stabilized in the presence of S-adenosyl-L-methionine (SAM). In terms of processing, automethylated; Lys-39 and Lys-179 serve as the major automethylation sites.

It localises to the nucleus. The enzyme catalyses L-lysyl-[protein] + S-adenosyl-L-methionine = N(6)-methyl-L-lysyl-[protein] + S-adenosyl-L-homocysteine + H(+). It carries out the reaction L-lysyl(8)-[histone H2AZ] + S-adenosyl-L-methionine = N(6)-methyl-L-lysyl(8)-[histone H2AZ] + S-adenosyl-L-homocysteine + H(+). Activated by automethylation. Its function is as follows. Protein-lysine N-methyltransferase. Monomethylates 'Lys-310' of the RELA subunit of NF-kappa-B complex, leading to down-regulation of NF-kappa-B transcription factor activity. Monomethylates 'Lys-8' of H2AZ (H2AZK8me1). Required for the maintenance of embryonic stem cell self-renewal. Methylates PAK4. The polypeptide is N-lysine methyltransferase SETD6 (Homo sapiens (Human)).